A 126-amino-acid polypeptide reads, in one-letter code: KH homology domain-containing protein 1B (126 aa).

Positions 19–78 (PLVFDMEEDQEDYIFGPDDEYLHTLEVHSNTLIQLERWFSPTGQTRVTVVGPLKARLWVM) constitute a KH domain.

The protein belongs to the KHDC1 family.

In Mus musculus (Mouse), this protein is KH homology domain-containing protein 1B (Khdc1b).